A 109-amino-acid polypeptide reads, in one-letter code: Cytochrome c (109 aa).

4 residues coordinate heme c: C25, C28, H29, and M88.

It belongs to the cytochrome c family. Binds 1 heme c group covalently per subunit.

The protein resides in the mitochondrion intermembrane space. Electron carrier protein. The oxidized form of the cytochrome c heme group can accept an electron from the heme group of the cytochrome c1 subunit of cytochrome reductase. Cytochrome c then transfers this electron to the cytochrome oxidase complex, the final protein carrier in the mitochondrial electron-transport chain. The sequence is that of Cytochrome c from Tetrahymena pyriformis.